Here is a 935-residue protein sequence, read N- to C-terminus: MSDYKDTLNLPKTSFSMKGNLANKEPMILNKWEKQGIYKKIREHFAGREKFVLHDGPPYANGSIHVGHAVNKILKDIIIKSKTLSGYDAPFTPTWDCHGLPIELQVEKKHGKAGQSISEDDFRKECRKYAKKQVEIQKKDFKRLGVLGDWEQPYLTMNFDYEANMIRTLAKIIENGHLSKGFKPVHWCTDCGSALAEAEVEYADKISPAIDVKFKIKDKDKLAQAFGLDSLNHDAFAIIWTTTPWTLPANQAIAVNNQLNYSLIKIEDFYIILAENLVEQTLKRYAIENAQIIATTTGDKLTGIIAEHPFYSRHVPILHGDHVTDDSGTGLVHTAPTHGVDDFTLGKEHNLSMEIFVKGNGCYSENTKLFAGEFIFKANDRIIELLGEKKRLMNSDKIKHSYPHCWRHKTPLMFRATPQWFISMEKQGLRNKALQAIKETSWAPSWGQARIEGMVKDRPDWCISRQRTWGVPLPLFIHKETEELHPNTIEILHKVAEKIEKGGIEAWFNADDCEFITETAQYKSVKDTLDVWFDSGSSSMCILDLDKRLSYPADLYLEGSDQHRGWFQTSLLVAMSAKGSQPYKEVFTHGFVVDEHGRKMSKSLGNVTSPQDIYNTLGADILRLWTASTDYKSEMAVSDQILKRTADTYRRLRNTARFLLSNLDGFNPATDIIEFDKLVKLDQWAIAKTKEFQDKIIEAYDKYQTHTVAQLIHHFCSIEMGSFYLDIIKDRQYTAKTDGHPRKSAQTAIYHIVHALVRWMAPILSFTADEIWDATPKTTDLPIQLCEWYTGLKSFDQDAELDLEYWAKIQEIRSEVNRVLEIKRNEDVVKASLEAEITIYADKDNYKLLEKLGNELRFLLISSKADLKVIEESTSSSIAANIPGLSIEITKIEEPKCERCWHRSSTVGDNPQYKDICSRCVENITTEAGESREFA.

A 'HIGH' region motif is present at residues 58-68; it reads PYANGSIHVGH. Glu-558 lines the L-isoleucyl-5'-AMP pocket. The short motif at 599 to 603 is the 'KMSKS' region element; the sequence is KMSKS. Lys-602 serves as a coordination point for ATP. The Zn(2+) site is built by Cys-897, Cys-900, Cys-917, and Cys-920.

It belongs to the class-I aminoacyl-tRNA synthetase family. IleS type 1 subfamily. As to quaternary structure, monomer. It depends on Zn(2+) as a cofactor.

It localises to the cytoplasm. It catalyses the reaction tRNA(Ile) + L-isoleucine + ATP = L-isoleucyl-tRNA(Ile) + AMP + diphosphate. In terms of biological role, catalyzes the attachment of isoleucine to tRNA(Ile). As IleRS can inadvertently accommodate and process structurally similar amino acids such as valine, to avoid such errors it has two additional distinct tRNA(Ile)-dependent editing activities. One activity is designated as 'pretransfer' editing and involves the hydrolysis of activated Val-AMP. The other activity is designated 'posttransfer' editing and involves deacylation of mischarged Val-tRNA(Ile). The sequence is that of Isoleucine--tRNA ligase from Francisella tularensis subsp. novicida (strain U112).